Reading from the N-terminus, the 104-residue chain is Urease subunit beta (104 aa).

This sequence belongs to the urease beta subunit family. In terms of assembly, heterotrimer of UreA (gamma), UreB (beta) and UreC (alpha) subunits. Three heterotrimers associate to form the active enzyme.

It is found in the cytoplasm. It catalyses the reaction urea + 2 H2O + H(+) = hydrogencarbonate + 2 NH4(+). It functions in the pathway nitrogen metabolism; urea degradation; CO(2) and NH(3) from urea (urease route): step 1/1. This is Urease subunit beta from Mycobacterium bovis (strain BCG / Pasteur 1173P2).